The chain runs to 227 residues: 7-cyano-7-deazaguanine synthase (227 aa).

Position 10 to 20 (10 to 20 (LSGGLDSCVAT)) interacts with ATP. Residues Cys-193, Cys-201, Cys-204, and Cys-207 each coordinate Zn(2+).

This sequence belongs to the QueC family. Zn(2+) is required as a cofactor.

The enzyme catalyses 7-carboxy-7-deazaguanine + NH4(+) + ATP = 7-cyano-7-deazaguanine + ADP + phosphate + H2O + H(+). It participates in purine metabolism; 7-cyano-7-deazaguanine biosynthesis. Functionally, catalyzes the ATP-dependent conversion of 7-carboxy-7-deazaguanine (CDG) to 7-cyano-7-deazaguanine (preQ(0)). The protein is 7-cyano-7-deazaguanine synthase of Methanobrevibacter smithii (strain ATCC 35061 / DSM 861 / OCM 144 / PS).